Consider the following 142-residue polypeptide: Large ribosomal subunit protein uL11 (142 aa).

Belongs to the universal ribosomal protein uL11 family. Part of the ribosomal stalk of the 50S ribosomal subunit. Interacts with L10 and the large rRNA to form the base of the stalk. L10 forms an elongated spine to which L12 dimers bind in a sequential fashion forming a multimeric L10(L12)X complex. In terms of processing, one or more lysine residues are methylated.

Forms part of the ribosomal stalk which helps the ribosome interact with GTP-bound translation factors. The chain is Large ribosomal subunit protein uL11 from Mycobacterium sp. (strain JLS).